We begin with the raw amino-acid sequence, 170 residues long: Regulator of ribonuclease activity A (170 aa).

This sequence belongs to the RraA family. Homotrimer. Binds to both RNA-binding sites in the C-terminal region of Rne and to RhlB.

Its subcellular location is the cytoplasm. Globally modulates RNA abundance by binding to RNase E (Rne) and regulating its endonucleolytic activity. Can modulate Rne action in a substrate-dependent manner by altering the composition of the degradosome. Modulates RNA-binding and helicase activities of the degradosome. The polypeptide is Regulator of ribonuclease activity A (Psychromonas ingrahamii (strain DSM 17664 / CCUG 51855 / 37)).